The sequence spans 313 residues: Intelectin-1a (313 aa).

Positions 1-18 (MTQLGFLLFIMVATRGCS) are cleaved as a signal peptide. Residues 32–251 (SFFSSLPRSC…NNERAASALC (220 aa)) form the Fibrinogen C-terminal domain. Residues cysteine 41 and cysteine 70 are joined by a disulfide bond. Residues histidine 86, glutamate 87, asparagine 89, glycine 92, glycine 97, aspartate 98, and aspartate 133 each coordinate Ca(2+). Intrachain disulfides connect cysteine 94/cysteine 280, cysteine 199/cysteine 259, and cysteine 251/cysteine 265. Positions 260, 262, 274, and 282 each coordinate Ca(2+). Residues 262-263 (EH) and glutamate 274 contribute to the a carbohydrate site. Serine 298 is lipidated: GPI-anchor amidated serine. Residues 299–313 (SSRKITEAAVLLFYR) constitute a propeptide that is removed on maturation.

As to quaternary structure, monomer. May interact with LTF. In terms of tissue distribution, expressed in small intestinal Paneth cells in uninfected mice. Expression also detected in various other tissues including stomach, kidney, ovary and brain.

It is found in the cell membrane. It localises to the secreted. Functionally, lectin that specifically recognizes microbial carbohydrate chains in a calcium-dependent manner. Binds to microbial glycans that contain a terminal acyclic 1,2-diol moiety, including beta-linked D-galactofuranose (beta-Galf), D-phosphoglycerol-modified glycans, D-glycero-D-talo-oct-2-ulosonic acid (KO) and 3-deoxy-D-manno-oct-2-ulosonic acid (KDO). Binds to glycans from Gram-positive and Gram-negative bacteria, including K.pneumoniae, S.pneumoniae, Y.pestis, P.mirabilis and P.vulgaris. Does not bind mammalian glycans. Probably plays a role in the defense system against microorganisms. May function as adipokine that has no effect on basal glucose uptake but enhances insulin-stimulated glucose uptake in adipocytes. Increases AKT phosphorylation in the absence and presence of insulin. May interact with lactoferrin/LTF and increase its uptake, and may thereby play a role in iron absorption. In Mus musculus (Mouse), this protein is Intelectin-1a (Itln1).